The following is a 266-amino-acid chain: Inositol-1-monophosphatase (266 aa).

The Mg(2+) site is built by glutamate 69, aspartate 86, leucine 88, and aspartate 89. Glutamate 69 is a binding site for substrate. Substrate contacts are provided by residues 88–91 (LDGT), arginine 185, and aspartate 214. Aspartate 214 contributes to the Mg(2+) binding site.

It belongs to the inositol monophosphatase superfamily. Requires Mg(2+) as cofactor.

It carries out the reaction a myo-inositol phosphate + H2O = myo-inositol + phosphate. This Rhizobium meliloti (strain 1021) (Ensifer meliloti) protein is Inositol-1-monophosphatase (suhB).